A 262-amino-acid polypeptide reads, in one-letter code: MTSAPTVSVITISFNDLDGLQRTVKSVRAQRYRGRIEHIVIDGGSGDDVVAYLSGCEPGFAYWQSEPDGGRYDAMNQGIAHASGDLLWFLHSADRFSGPDVVAQAVEALSGKGPVSELWGFGMDRLVGLDRVRGPIPFSLRKFLAGKQVVPHQASFFGSSLVAKIGGYDLDFGIAADQEFILRAALVCEPVTIRCVLCEFDTTGVGSHREPSAVFGDLRRMGDLHRRYPFGGRRISHAYLRGREFYAYNSRFWENVFTRMSK.

It belongs to the glycosyltransferase 2 family.

This is an uncharacterized protein from Mycobacterium tuberculosis (strain CDC 1551 / Oshkosh).